A 387-amino-acid polypeptide reads, in one-letter code: Type 2 DNA topoisomerase 6 subunit A (387 aa).

The region spanning 12–160 (EARKKALAVF…MLILSKEKGK (149 aa)) is the Topo IIA-type catalytic domain. The active-site O-(5'-phospho-DNA)-tyrosine intermediate is Tyr106. Mg(2+) contacts are provided by Glu207 and Asp259.

The protein belongs to the TOP6A family. Homodimer. Heterotetramer of two Top6A and two Top6B chains. The cofactor is Mg(2+).

It carries out the reaction ATP-dependent breakage, passage and rejoining of double-stranded DNA.. Relaxes both positive and negative superturns and exhibits a strong decatenase activity. The protein is Type 2 DNA topoisomerase 6 subunit A of Hyperthermus butylicus (strain DSM 5456 / JCM 9403 / PLM1-5).